The primary structure comprises 1110 residues: Serine/threonine-protein kinase PknK (1110 aa).

Positions 26 to 283 (FDNVEEIGRG…TAADVGEELR (258 aa)) constitute a Protein kinase domain. Residues 32 to 40 (IGRGGFGVV) and Lys-55 each bind ATP. The Proton acceptor role is filled by Arg-148. Residues Asn-154 and Asp-167 each contribute to the Mg(2+) site. Residues 308–343 (RSPEAHAAHRHTGGGTPTVPTPPTPATKYRPSVPTG) are disordered.

This sequence belongs to the protein kinase superfamily. Ser/Thr protein kinase family.

It carries out the reaction L-seryl-[protein] + ATP = O-phospho-L-seryl-[protein] + ADP + H(+). The catalysed reaction is L-threonyl-[protein] + ATP = O-phospho-L-threonyl-[protein] + ADP + H(+). The chain is Serine/threonine-protein kinase PknK (pknK) from Mycobacterium bovis (strain ATCC BAA-935 / AF2122/97).